Consider the following 462-residue polypeptide: Cysteine--tRNA ligase (462 aa).

C30 serves as a coordination point for Zn(2+). Positions 32–42 (MTVYDYCHVGH) match the 'HIGH' region motif. The Zn(2+) site is built by C214, H239, and E243. The 'KMSKS' region signature appears at 271-275 (KMSKS). K274 is an ATP binding site.

This sequence belongs to the class-I aminoacyl-tRNA synthetase family. Monomer. It depends on Zn(2+) as a cofactor.

It is found in the cytoplasm. It carries out the reaction tRNA(Cys) + L-cysteine + ATP = L-cysteinyl-tRNA(Cys) + AMP + diphosphate. This chain is Cysteine--tRNA ligase, found in Cupriavidus necator (strain ATCC 17699 / DSM 428 / KCTC 22496 / NCIMB 10442 / H16 / Stanier 337) (Ralstonia eutropha).